Reading from the N-terminus, the 325-residue chain is Melanocortin receptor 5 (325 aa).

Residues 1 to 37 (MNSSSTLTVLNLTLNASEDGILGSNVKNKSLACEEMG) lie on the Extracellular side of the membrane. 4 N-linked (GlcNAc...) asparagine glycosylation sites follow: Asn-2, Asn-11, Asn-15, and Asn-28. The helical transmembrane segment at 38 to 61 (IAVEVFLTLGLVSLLENILVIGAI) threads the bilayer. The Cytoplasmic segment spans residues 62 to 73 (VKNKNLHSPMYF). A helical transmembrane segment spans residues 74–97 (FVGSLAVADMLVSMSNAWETVTIY). Over 98-114 (LLNNKHLVIADTFVRHI) the chain is Extracellular. A helical transmembrane segment spans residues 115 to 138 (DNVFDSMICISVVASMCSLLAIAV). Over 139–155 (DRYITIFYALRYHHIMT) the chain is Cytoplasmic. A helical transmembrane segment spans residues 156–179 (ARRSGVIIACIWTFCISCGIVFII). The Extracellular portion of the chain corresponds to 180-186 (YYESKYV). Residues 187–211 (IICLISMFFTMLFFMVSLYIHMFLL) traverse the membrane as a helical segment. The Cytoplasmic portion of the chain corresponds to 212-239 (ARNHVKRIAASPRYNSVRQRTSMKGAIT). The helical transmembrane segment at 240 to 265 (LTMLLGIFIVCWSPFFLHLILMISCP) threads the bilayer. Topologically, residues 266–273 (QNVYCSCF) are extracellular. Residues 274–297 (MSYFNMYLILIMCNSVIDPLIYAL) form a helical membrane-spanning segment. Residues 298–325 (RSQEMRRTFKEIVCCHGFRRPCRLLGGY) are Cytoplasmic-facing. Residues Cys-311 and Cys-312 are each lipidated (S-palmitoyl cysteine).

The protein belongs to the G-protein coupled receptor 1 family. As to expression, skin, adrenal gland, skeletal muscle, bone marrow, spleen, thymus, gonads, uterus and brain.

Its subcellular location is the cell membrane. Its function is as follows. Receptor for MSH (alpha, beta and gamma) and ACTH. The activity of this receptor is mediated by G proteins which activate adenylate cyclase. This receptor is a possible mediator of the immunomodulation properties of melanocortins. This chain is Melanocortin receptor 5 (Mc5r), found in Mus musculus (Mouse).